We begin with the raw amino-acid sequence, 313 residues long: Non-functional target of rapamycin complex subunit LST8-2 (313 aa).

7 WD repeats span residues 1 to 35 (MFENKPDDSPVYLATASHDQTIRLWQARTGRCYFS), 38 to 76 (YPDLHVNRLELTPEKGKLVAACNPHIRLFDLRSYNPHIP), 82 to 121 (SHTKNVMAVGFQYTGHMMYSGSEDGSVKIWDLRVRECQRE), 123 to 162 (RSVSPVNTVVLHPNQTELISGDQNGNIRVWDLRADLCSCE), 166 to 205 (EVGTPIRSLTVMWDGTMVVAANDRGTCYVWRSLCERQTMT), 215 to 255 (AHNS…LEKV), and 258 to 297 (GHERWVWDCDFSMDGEYLVTASSDTTARLWSMRAGKEEMV).

Belongs to the WD repeat LST8 family.

Functionally, probable non-functional protein. The sequence is that of Non-functional target of rapamycin complex subunit LST8-2 from Arabidopsis thaliana (Mouse-ear cress).